A 399-amino-acid polypeptide reads, in one-letter code: Serine/threonine-protein kinase PKZ1 (399 aa).

A disordered region spans residues 30–50; that stretch reads PMQCAYQTQSHSNPEGAKRGR. The Protein kinase domain occupies 92–371; the sequence is WQLFDQIGAG…ADQMLQHPWM (280 aa). Residues 98–106 and Lys121 each bind ATP; that span reads IGAGAFGVV. The active-site Proton acceptor is the Asp219.

The protein belongs to the protein kinase superfamily. CAMK Ser/Thr protein kinase family. Interacts with BZP1.

The catalysed reaction is L-seryl-[protein] + ATP = O-phospho-L-seryl-[protein] + ADP + H(+). It catalyses the reaction L-threonyl-[protein] + ATP = O-phospho-L-threonyl-[protein] + ADP + H(+). Functionally, may regulate an early stage of the zoospore pathway. The protein is Serine/threonine-protein kinase PKZ1 of Phytophthora infestans (Potato late blight agent).